Reading from the N-terminus, the 457-residue chain is Multidrug resistance protein MdtK (457 aa).

The next 12 membrane-spanning stretches (helical) occupy residues 11–31 (LLAL…MGVV), 53–73 (IWLP…PIVA), 93–113 (WLAT…RFII), 127–147 (AIGF…YQVL), 160–180 (GMII…AFIY), 188–208 (LGGI…FLMM), 243–263 (LPVG…ALLV), 276–296 (IALN…IAAT), 316–336 (ITAL…SIIF), 357–377 (LMLF…GSGV), 387–407 (IFFI…YLLG), and 416–436 (MGPA…AIMM).

This sequence belongs to the multi antimicrobial extrusion (MATE) (TC 2.A.66.1) family. MdtK subfamily.

The protein localises to the cell inner membrane. Functionally, multidrug efflux pump that functions probably as a Na(+)/drug antiporter. This is Multidrug resistance protein MdtK from Proteus mirabilis (strain HI4320).